Reading from the N-terminus, the 473-residue chain is Ribulose bisphosphate carboxylase large chain (473 aa).

Substrate-binding residues include asparagine 116 and threonine 166. Lysine 168 (proton acceptor) is an active-site residue. Position 170 (lysine 170) interacts with substrate. Lysine 194, aspartate 196, and glutamate 197 together coordinate Mg(2+). Lysine 194 carries the N6-carboxylysine modification. The active-site Proton acceptor is histidine 287. 3 residues coordinate substrate: arginine 288, histidine 320, and serine 372.

The protein belongs to the RuBisCO large chain family. Type I subfamily. In terms of assembly, heterohexadecamer of 8 large chains and 8 small chains. In R.sphaeroides the complex is approximately 500 kDa. It depends on Mg(2+) as a cofactor.

It carries out the reaction 2 (2R)-3-phosphoglycerate + 2 H(+) = D-ribulose 1,5-bisphosphate + CO2 + H2O. The catalysed reaction is D-ribulose 1,5-bisphosphate + O2 = 2-phosphoglycolate + (2R)-3-phosphoglycerate + 2 H(+). In terms of biological role, ruBisCO catalyzes two reactions: the carboxylation of D-ribulose 1,5-bisphosphate, the primary event in carbon dioxide fixation, as well as the oxidative fragmentation of the pentose substrate. Both reactions occur simultaneously and in competition at the same active site. The polypeptide is Ribulose bisphosphate carboxylase large chain (Thiobacillus denitrificans (strain ATCC 25259 / T1)).